The chain runs to 1367 residues: Probable serine/threonine-protein kinase pkgA (1367 aa).

Disordered regions lie at residues 140-164, 264-429, 456-556, and 771-792; these read IDEN…NKTI, KNGK…LLSR, PTPL…SRKP, and PREE…SDPV. Residues 143–162 are compositionally biased toward low complexity; sequence NNNNNNNNNNNNNNNNNKNK. Over residues 271–282 the composition is skewed to pro residues; sequence IKRPSPPLPPPQ. Basic and acidic residues predominate over residues 287–326; it reads EQQKEQKEQQKEQQKEQQKEQQKEQEQKQQEPQKYVKFEI. Residues 340 to 381 show a composition bias toward low complexity; that stretch reads ISSSNISNEISKQQQQQQQQQQQQQQQQQQQQQQQQQQQQQQ. A compositionally biased stretch (polar residues) spans 399–421; sequence ANNNILTTPLSSQPTQSLETPST. A compositionally biased stretch (acidic residues) spans 506 to 517; sequence GEDEEEDEDDDN. Residues 531-544 show a composition bias toward basic residues; sequence LKNKRPFKKTHVHH. Positions 810–1236 constitute a Protein kinase domain; that stretch reads FEFIKPITKG…AEEIKSHPFF (427 aa). ATP-binding positions include 816–824 and K839; that span reads ITKGGYGKV. D933 functions as the Proton acceptor in the catalytic mechanism. 3 disordered regions span residues 971–1034, 1084–1134, and 1288–1312; these read FSPT…PSNT, FIPP…HNIH, and QNQN…TATA. The segment covering 979–1015 has biased composition (low complexity); the sequence is NNQSSSSSSVSNIGGSNTIGSNISSTNNNNNNNNTTG. The span at 1025–1034 shows a compositional bias: polar residues; sequence NTETPIPSNT. Composition is skewed to low complexity over residues 1092-1125 and 1294-1312; these read QQPI…QQTT and SSTI…TATA. Residues 1237–1347 form the AGC-kinase C-terminal domain; that stretch reads KSINWKTILT…VNFQSLLELN (111 aa).

It belongs to the protein kinase superfamily. AGC Ser/Thr protein kinase family.

It carries out the reaction L-seryl-[protein] + ATP = O-phospho-L-seryl-[protein] + ADP + H(+). It catalyses the reaction L-threonyl-[protein] + ATP = O-phospho-L-threonyl-[protein] + ADP + H(+). The sequence is that of Probable serine/threonine-protein kinase pkgA (pkgA) from Dictyostelium discoideum (Social amoeba).